We begin with the raw amino-acid sequence, 159 residues long: Growth arrest and DNA damage-inducible protein GADD45 gamma (159 aa).

The tract at residues 43–86 (VYESAKVLNVDPDNVTFCVLAADEEDEGDIALQIHFTLIQAFCC) is homodimerization.

This sequence belongs to the GADD45 family. In terms of assembly, undergoes concentration-dependent homodimerization, which is required for growth inhibititory activity and enhances interaction with PCNA. Interacts with GADD45GIP1. Interacts with PCNA.

Functionally, involved in the regulation of growth and apoptosis. Mediates activation of stress-responsive MTK1/MEKK4 MAPKKK. The polypeptide is Growth arrest and DNA damage-inducible protein GADD45 gamma (Gadd45g) (Mus musculus (Mouse)).